The primary structure comprises 166 residues: Large ribosomal subunit protein uL10 (166 aa).

The protein belongs to the universal ribosomal protein uL10 family. As to quaternary structure, part of the ribosomal stalk of the 50S ribosomal subunit. The N-terminus interacts with L11 and the large rRNA to form the base of the stalk. The C-terminus forms an elongated spine to which L12 dimers bind in a sequential fashion forming a multimeric L10(L12)X complex.

In terms of biological role, forms part of the ribosomal stalk, playing a central role in the interaction of the ribosome with GTP-bound translation factors. The polypeptide is Large ribosomal subunit protein uL10 (Pseudomonas syringae pv. syringae (strain B728a)).